The following is a 336-amino-acid chain: Fructose-1,6-bisphosphatase class 1 (336 aa).

4 residues coordinate Mg(2+): Glu-90, Asp-112, Leu-114, and Asp-115. Residues 115–118 (DGSS), Asn-211, and Lys-277 each bind substrate. Glu-283 contacts Mg(2+).

This sequence belongs to the FBPase class 1 family. As to quaternary structure, homotetramer. It depends on Mg(2+) as a cofactor.

The protein resides in the cytoplasm. The enzyme catalyses beta-D-fructose 1,6-bisphosphate + H2O = beta-D-fructose 6-phosphate + phosphate. Its pathway is carbohydrate biosynthesis; gluconeogenesis. This Pseudomonas syringae pv. syringae (strain B728a) protein is Fructose-1,6-bisphosphatase class 1.